A 475-amino-acid polypeptide reads, in one-letter code: MSSESISENYVVKDMGLAEWGRREIRMAEAEMPGLMAIREEYRGTKPLAGARITGSLHMTIQTAVLIETLAELGADLRWASCNIYSTQDHAAAAIAATGVPVFAYKGETLEEYWEYTFKALAYEEGPQLIVDDGGDATLLIHRGVERERAYARTGKVPEISHDNKELSIVDALLNRQLLVDAEYWQRMATGLLGVSEETTTGVHRLYHMARNGELLFPAFNVNDSVTKSKFDNLYGCRESLIDGIKRATDVMIAGKKCVVLGYGDVGKGCAQAFKGMGALVSVTEVDPICALQAAMEGFAVVDMDEACQWGDIFVTTTGNVDVITRSHMDVMKNEAIVCNIGHFDSEIQVDALYDDPSLTVHEVKPQVDQIEWPDGKRITVLAKGRLVNLGCATGHPSFVMSNSFTNQVLAQIELWQNSDRYENKVYVLPKQLDEKVARLHLANLGVKLTRMTEKQADYLGVPVDGPYKPEHYRY.

The substrate site is built by T60, D133, and E198. 199-201 is an NAD(+) binding site; it reads TTT. Substrate contacts are provided by K228 and D232. Residues N233, 262–267, E285, N320, 341–343, and N389 contribute to the NAD(+) site; these read GYGDVG and IGH.

This sequence belongs to the adenosylhomocysteinase family. The cofactor is NAD(+).

The protein resides in the cytoplasm. It carries out the reaction S-adenosyl-L-homocysteine + H2O = L-homocysteine + adenosine. The protein operates within amino-acid biosynthesis; L-homocysteine biosynthesis; L-homocysteine from S-adenosyl-L-homocysteine: step 1/1. Functionally, may play a key role in the regulation of the intracellular concentration of adenosylhomocysteine. The sequence is that of Adenosylhomocysteinase from Syntrophotalea carbinolica (strain DSM 2380 / NBRC 103641 / GraBd1) (Pelobacter carbinolicus).